Consider the following 310-residue polypeptide: Methionyl-tRNA formyltransferase (310 aa).

110–113 (SLLP) contributes to the (6S)-5,6,7,8-tetrahydrofolate binding site.

The protein belongs to the Fmt family.

It carries out the reaction L-methionyl-tRNA(fMet) + (6R)-10-formyltetrahydrofolate = N-formyl-L-methionyl-tRNA(fMet) + (6S)-5,6,7,8-tetrahydrofolate + H(+). Attaches a formyl group to the free amino group of methionyl-tRNA(fMet). The formyl group appears to play a dual role in the initiator identity of N-formylmethionyl-tRNA by promoting its recognition by IF2 and preventing the misappropriation of this tRNA by the elongation apparatus. This chain is Methionyl-tRNA formyltransferase, found in Clostridium acetobutylicum (strain ATCC 824 / DSM 792 / JCM 1419 / IAM 19013 / LMG 5710 / NBRC 13948 / NRRL B-527 / VKM B-1787 / 2291 / W).